We begin with the raw amino-acid sequence, 429 residues long: S-adenosylmethionine synthase (429 aa).

Residue Glu9 participates in Mg(2+) binding. His15 lines the ATP pocket. Glu43 is a K(+) binding site. L-methionine contacts are provided by Glu56 and Gln99. ATP contacts are provided by residues 167 to 169 (DGK), 235 to 238 (SGRF), Asp246, 252 to 253 (RK), Ala269, Lys273, and Lys277. Asp246 provides a ligand contact to L-methionine. Lys277 contributes to the L-methionine binding site.

The protein belongs to the AdoMet synthase family. In terms of assembly, homotetramer. It depends on Mn(2+) as a cofactor. Mg(2+) serves as cofactor. The cofactor is Co(2+). K(+) is required as a cofactor.

It is found in the cytoplasm. It catalyses the reaction L-methionine + ATP + H2O = S-adenosyl-L-methionine + phosphate + diphosphate. Its pathway is amino-acid biosynthesis; S-adenosyl-L-methionine biosynthesis; S-adenosyl-L-methionine from L-methionine: step 1/1. Its function is as follows. Catalyzes the formation of S-adenosylmethionine from methionine and ATP. The reaction comprises two steps that are both catalyzed by the same enzyme: formation of S-adenosylmethionine (AdoMet) and triphosphate, and subsequent hydrolysis of the triphosphate. The sequence is that of S-adenosylmethionine synthase (SAMS) from Carica papaya (Papaya).